The primary structure comprises 392 residues: Succinyl-diaminopimelate desuccinylase (392 aa).

Zn(2+) is bound at residue histidine 77. The active site involves aspartate 79. Aspartate 110 serves as a coordination point for Zn(2+). The Proton acceptor role is filled by glutamate 144. Residues glutamate 145, glutamate 173, and histidine 359 each coordinate Zn(2+).

This sequence belongs to the peptidase M20A family. DapE subfamily. In terms of assembly, homodimer. The cofactor is Zn(2+). Requires Co(2+) as cofactor.

The catalysed reaction is N-succinyl-(2S,6S)-2,6-diaminopimelate + H2O = (2S,6S)-2,6-diaminopimelate + succinate. The protein operates within amino-acid biosynthesis; L-lysine biosynthesis via DAP pathway; LL-2,6-diaminopimelate from (S)-tetrahydrodipicolinate (succinylase route): step 3/3. In terms of biological role, catalyzes the hydrolysis of N-succinyl-L,L-diaminopimelic acid (SDAP), forming succinate and LL-2,6-diaminopimelate (DAP), an intermediate involved in the bacterial biosynthesis of lysine and meso-diaminopimelic acid, an essential component of bacterial cell walls. In Thiobacillus denitrificans (strain ATCC 25259 / T1), this protein is Succinyl-diaminopimelate desuccinylase.